A 601-amino-acid chain; its full sequence is Glutathione-regulated potassium-efflux system protein KefB (601 aa).

13 helical membrane passes run 4 to 24, 29 to 49, 55 to 75, 87 to 107, 111 to 131, 152 to 172, 177 to 197, 207 to 227, 230 to 250, 262 to 282, 284 to 304, 324 to 344, and 356 to 376; these read ADLLTAGVLFLFAAVAAVPLA, IGAVLGYLLAGIAIGPWGLGF, EILHFSELGVVFLMFIIGLEL, IFGVGAAQVLLSAAVLAGLLM, FLWQAAVVGGIGLAMSSTAMA, VLLFQDLAVIPALALVPLLAG, HFDWFKVAMKVLAFAVMLIGG, FIAASGVREVFTAATLLLVLS, LFMDALGLSMALGTFIAGVLL, AIDPFKGLLLGLFFISVGMSL, LGVLYTHLLWVAASVVILVVI, MQFASVLSQGGEFAFVLFSTA, and ALLLVTVTLSMMTTPLLMKGI. Residues 400–519 form the RCK N-terminal domain; sequence KPQVIVVGFG…AGVTQFSRET (120 aa).

The protein belongs to the monovalent cation:proton antiporter 2 (CPA2) transporter (TC 2.A.37) family. KefB subfamily. In terms of assembly, interacts with the regulatory subunit KefG.

It localises to the cell inner membrane. Its function is as follows. Pore-forming subunit of a potassium efflux system that confers protection against electrophiles. Catalyzes K(+)/H(+) antiport. The protein is Glutathione-regulated potassium-efflux system protein KefB of Salmonella newport (strain SL254).